The following is a 657-amino-acid chain: DNA mismatch repair protein MutL (657 aa).

This sequence belongs to the DNA mismatch repair MutL/HexB family.

This protein is involved in the repair of mismatches in DNA. It is required for dam-dependent methyl-directed DNA mismatch repair. May act as a 'molecular matchmaker', a protein that promotes the formation of a stable complex between two or more DNA-binding proteins in an ATP-dependent manner without itself being part of a final effector complex. The protein is DNA mismatch repair protein MutL of Streptococcus agalactiae serotype III (strain NEM316).